Consider the following 364-residue polypeptide: Geranylfarnesyl diphosphate synthase, chloroplastic (364 aa).

The transit peptide at 1–51 directs the protein to the chloroplast; that stretch reads MSHCTIFLYKYFPGKPRYQHCSFLHPLNHKLKSLFLPITGSRFLSNSTFSV. K72, K111, and H143 together coordinate isopentenyl diphosphate. Mg(2+) is bound by residues D150 and D156. R161 provides a ligand contact to dimethylallyl diphosphate. Residue R162 coordinates isopentenyl diphosphate. Positions 249, 250, 287, 294, 304, and 314 each coordinate dimethylallyl diphosphate.

The protein belongs to the FPP/GGPP synthase family. In terms of assembly, monomer. Mg(2+) is required as a cofactor. Strongly expressed in glandular trichomes, and, at low levels, in leaves, stems and flowers.

The protein resides in the plastid. It localises to the chloroplast. It catalyses the reaction isopentenyl diphosphate + (2E,6E,10E)-geranylgeranyl diphosphate = (2E,6E,10E,14E)-geranylfarnesyl diphosphate + diphosphate. The enzyme catalyses 2 isopentenyl diphosphate + (2E,6E)-farnesyl diphosphate = (2E,6E,10E,14E)-geranylfarnesyl diphosphate + 2 diphosphate. It carries out the reaction 3 isopentenyl diphosphate + (2E)-geranyl diphosphate = (2E,6E,10E,14E)-geranylfarnesyl diphosphate + 3 diphosphate. The catalysed reaction is 4 isopentenyl diphosphate + dimethylallyl diphosphate = (2E,6E,10E,14E)-geranylfarnesyl diphosphate + 4 diphosphate. The protein operates within secondary metabolite biosynthesis; terpenoid biosynthesis. It functions in the pathway isoprenoid biosynthesis. Involved in the biosynthesis of leucosceptrane sesterterpenoids natural products, which are playing defensive roles toward herbivorus insects (e.g. Spodoptera exigua). Catalyzes the condensation of isopentenyl pyrophosphate (IDP) with the allylic pyrophosphates to yield geranylfarnesyl diphosphate (GFDP), the C(25) prenyl diphosphate precursor to all sesterterpenoids. Geranylgeranyl diphosphate (GGPP) is the preferred substrate, however dimethylallyl diphosphate (DMADP), farnesyl diphosphate (FDP) and geranyl diphosphate (GDP) can also be used as allylic substrate. The sequence is that of Geranylfarnesyl diphosphate synthase, chloroplastic from Leucosceptrum canum (Hairy white-wand).